A 559-amino-acid polypeptide reads, in one-letter code: DNA ligase (559 aa).

Residue Glu231 participates in ATP binding. The active-site N6-AMP-lysine intermediate is the Lys233. Residues Arg238 and Glu285 each coordinate ATP. Mg(2+) is bound by residues Glu285 and Glu379. ATP is bound by residues Lys384 and Lys399.

It belongs to the ATP-dependent DNA ligase family. Interacts with host TOP2A and TOP2B. Mg(2+) is required as a cofactor.

The protein localises to the host cytoplasm. It carries out the reaction ATP + (deoxyribonucleotide)n-3'-hydroxyl + 5'-phospho-(deoxyribonucleotide)m = (deoxyribonucleotide)n+m + AMP + diphosphate.. DNA ligase that seals nicks in double-stranded DNA during DNA replication, DNA recombination and DNA repair. Recruits cellular topoisomerase II to sites of viral replication and assembly. The sequence is that of DNA ligase (OPG180) from Monkeypox virus.